A 413-amino-acid polypeptide reads, in one-letter code: Exodeoxyribonuclease I (413 aa).

The Exonuclease domain maps to 12 to 193 (LFYDYETFGI…VSDVYATIEI (182 aa)). 3 residues coordinate Mg(2+): Asp-15, Glu-17, and Asp-186. Glu-17 is a binding site for substrate. Residues 202–349 (PRLFDFFFKI…QNIKIIFSKN (148 aa)) enclose the ExoI SH3-like domain. Residues 350 to 413 (NNTNQFFNVD…RYRARNFFIH (64 aa)) enclose the ExoI C-terminal domain.

As to quaternary structure, monomer. Interacts with ssb (via C-terminus); this interaction stimulates the exonuclease activity by recruiting the enzyme to its substrate. It depends on Mg(2+) as a cofactor.

The catalysed reaction is Exonucleolytic cleavage in the 3'- to 5'-direction to yield nucleoside 5'-phosphates.. Degrades single-stranded DNA (ssDNA) in a highly processive manner. Also functions as a DNA deoxyribophosphodiesterase that releases deoxyribose-phosphate moieties following the cleavage of DNA at an apurinic/apyrimidinic (AP) site by either an AP endonuclease or AP lyase. The polypeptide is Exodeoxyribonuclease I (sbcB) (Buchnera aphidicola subsp. Acyrthosiphon pisum (strain APS) (Acyrthosiphon pisum symbiotic bacterium)).